The chain runs to 739 residues: Phosphoribosylformylglycinamidine synthase subunit PurL (739 aa).

His-53 is a catalytic residue. ATP-binding residues include Tyr-56 and Lys-95. Residue Glu-97 participates in Mg(2+) binding. Residues 98-101 (SHNH) and Arg-120 contribute to the substrate site. His-99 acts as the Proton acceptor in catalysis. Asp-121 provides a ligand contact to Mg(2+). Gln-244 contributes to the substrate binding site. Asp-274 provides a ligand contact to Mg(2+). Position 318-320 (318-320 (ESQ)) interacts with substrate. 2 residues coordinate ATP: Asp-501 and Gly-538. Mg(2+) is bound at residue Asn-539. Ser-541 contacts substrate.

The protein belongs to the FGAMS family. In terms of assembly, monomer. Part of the FGAM synthase complex composed of 1 PurL, 1 PurQ and 2 PurS subunits.

It localises to the cytoplasm. It catalyses the reaction N(2)-formyl-N(1)-(5-phospho-beta-D-ribosyl)glycinamide + L-glutamine + ATP + H2O = 2-formamido-N(1)-(5-O-phospho-beta-D-ribosyl)acetamidine + L-glutamate + ADP + phosphate + H(+). It participates in purine metabolism; IMP biosynthesis via de novo pathway; 5-amino-1-(5-phospho-D-ribosyl)imidazole from N(2)-formyl-N(1)-(5-phospho-D-ribosyl)glycinamide: step 1/2. Part of the phosphoribosylformylglycinamidine synthase complex involved in the purines biosynthetic pathway. Catalyzes the ATP-dependent conversion of formylglycinamide ribonucleotide (FGAR) and glutamine to yield formylglycinamidine ribonucleotide (FGAM) and glutamate. The FGAM synthase complex is composed of three subunits. PurQ produces an ammonia molecule by converting glutamine to glutamate. PurL transfers the ammonia molecule to FGAR to form FGAM in an ATP-dependent manner. PurS interacts with PurQ and PurL and is thought to assist in the transfer of the ammonia molecule from PurQ to PurL. The polypeptide is Phosphoribosylformylglycinamidine synthase subunit PurL (Listeria innocua serovar 6a (strain ATCC BAA-680 / CLIP 11262)).